Consider the following 267-residue polypeptide: Heme-containing CO-sensing transcriptional regulator RcoM 1 (267 aa).

Residues 15–86 (RAETFQHKLE…KSRDKLRFLL (72 aa)) form the PAS domain. H74 and M104 together coordinate heme. In terms of domain architecture, HTH LytTR-type spans 161-266 (IPVYRKNRVI…TAQLKELLGV (106 aa)).

Heme is required as a cofactor.

It is found in the cytoplasm. In terms of biological role, one-component, b-type heme-containing aerobic sensor and transcriptional regulator that responds to CO by activating the expression of the oxidation operon cox. This is Heme-containing CO-sensing transcriptional regulator RcoM 1 (rcoM1) from Paraburkholderia xenovorans (strain LB400).